The primary structure comprises 677 residues: Pro-neuregulin-1, membrane-bound isoform (677 aa).

The span at 1-12 shows a compositional bias: basic and acidic residues; that stretch reads MAEKKKVKEGKG. 2 disordered regions span residues 1 to 43 and 78 to 106; these read MAEK…KEIK and GAKN…ISKA. At 1 to 260 the chain is on the extracellular side; that stretch reads MAEKKKVKEG…MEAEELYQKR (260 aa). Residues 13–24 are compositionally biased toward basic residues; the sequence is RKGKGKKDRKGK. Residues 37-132 enclose the Ig-like C2-type domain; the sequence is PKLKEIKTQS…GNDTVTVNVT (96 aa). A disulfide bridge connects residues Cys57 and Cys116. The segment covering 78–91 has biased composition (basic and acidic residues); that stretch reads GAKNKPDSKPEHIK. Residues Asn124 and Asn130 are each glycosylated (N-linked (GlcNAc...) asparagine). Positions 188-232 constitute an EGF-like domain; the sequence is HLIKCSDKEKTYCVNGGECYVLNGITSSNQFMCKCKPGFTGARCT. 3 disulfide bridges follow: Cys192–Cys206, Cys200–Cys220, and Cys222–Cys231. Residues 261–280 form a helical membrane-spanning segment; the sequence is VLTITGICIDLLVVGDMCVV. The Cytoplasmic portion of the chain corresponds to 281 to 677; sequence DAYCKTKKQR…RKMTCKTLFI (397 aa). The segment covering 294 to 315 has biased composition (basic and acidic residues); the sequence is NDRLRQSLRERNKNITNKDNRP. Disordered regions lie at residues 294-326, 350-375, 397-418, 457-479, and 503-617; these read NDRL…PRKN, ETSF…PSHS, SVEN…GIGG, VEFK…ESSL, and PPRL…FLSI. A compositionally biased stretch (low complexity) spans 351–375; that stretch reads TSFSTSHYTSTTHHSTTVTQTPSHS. Polar residues predominate over residues 397 to 407; that stretch reads SVENSRHTSPT. Positions 505 to 515 are enriched in basic and acidic residues; the sequence is RLREKRYDRKT. The segment covering 568-578 has biased composition (basic residues); the sequence is VNSRRQKRTKP. The span at 591–600 shows a compositional bias: low complexity; sequence DSSSESSTSE.

The protein belongs to the neuregulin family. In terms of processing, proteolytic cleavage close to the plasma membrane on the external face leads to the release of the soluble growth factor form. Extensive glycosylation precedes the proteolytic cleavage. As to expression, isoform alpha1 is expressed in brain and muscle. Isoform CRD is expressed in brain and spinal cord, but at very low level in muscle.

It localises to the cell membrane. The protein localises to the secreted. Functionally, direct ligand for the ERBB tyrosine kinase receptors. Induces expression of acetylcholine receptor in synaptic nuclei. The sequence is that of Pro-neuregulin-1, membrane-bound isoform (nrg1) from Xenopus laevis (African clawed frog).